The following is a 494-amino-acid chain: Guanosine-5'-triphosphate,3'-diphosphate pyrophosphatase (494 aa).

This sequence belongs to the GppA/Ppx family. GppA subfamily.

It catalyses the reaction guanosine 3'-diphosphate 5'-triphosphate + H2O = guanosine 3',5'-bis(diphosphate) + phosphate + H(+). It participates in purine metabolism; ppGpp biosynthesis; ppGpp from GTP: step 2/2. In terms of biological role, catalyzes the conversion of pppGpp to ppGpp. Guanosine pentaphosphate (pppGpp) is a cytoplasmic signaling molecule which together with ppGpp controls the 'stringent response', an adaptive process that allows bacteria to respond to amino acid starvation, resulting in the coordinated regulation of numerous cellular activities. The sequence is that of Guanosine-5'-triphosphate,3'-diphosphate pyrophosphatase from Escherichia coli O139:H28 (strain E24377A / ETEC).